The chain runs to 210 residues: Glutathione S-transferase P (210 aa).

Positions 2–81 (PPYTIVYFPV…HLGRSLGLYG (80 aa)) constitute a GST N-terminal domain. At Tyr-4 the chain carries Phosphotyrosine; by EGFR. Glutathione is bound by residues Tyr-8, Arg-14, Trp-39, Lys-45, and 52-53 (QL). Phosphothreonine is present on Thr-62. 65–66 (QS) is a binding site for glutathione. The GST C-terminal domain occupies 83–204 (DQREAALVDM…SSPDHVNRPI (122 aa)). Lys-103 and Lys-116 each carry N6-succinyllysine. Lys-128 carries the post-translational modification N6-acetyllysine.

It belongs to the GST superfamily. Pi family. In terms of assembly, homodimer. Interacts with CDK5.

It localises to the cytoplasm. The protein localises to the mitochondrion. It is found in the nucleus. It catalyses the reaction RX + glutathione = an S-substituted glutathione + a halide anion + H(+). The enzyme catalyses prostaglandin J2 + glutathione = prostaglandin J2-S-(R)-glutathione. The catalysed reaction is prostaglandin J2 + glutathione = prostaglandin J2-S-(S)-glutathione. It carries out the reaction prostaglandin A2 + glutathione = prostaglandin A2-S-(S)-glutathione. It catalyses the reaction 11(S)-hydroxy-14(S),15(S)-epoxy-(5Z,8Z,12E)-eicosatrienoate + glutathione = (11S,15S)-dihydroxy-14(R)-S-glutathionyl-(5Z,8Z,12E)-eicosatrienoate. Its function is as follows. Conjugation of reduced glutathione to a wide number of exogenous and endogenous hydrophobic electrophiles. Involved in the formation of glutathione conjugates of both prostaglandin A2 (PGA2) and prostaglandin J2 (PGJ2). Participates in the formation of novel hepoxilin regioisomers. Negatively regulates CDK5 activity via p25/p35 translocation to prevent neurodegeneration. This chain is Glutathione S-transferase P (GSTP1), found in Cricetulus longicaudatus (Long-tailed dwarf hamster).